A 290-amino-acid polypeptide reads, in one-letter code: Pyridoxal kinase PdxY (290 aa).

Substrate contacts are provided by residues Ser-12 and 47 to 48 (TQ). Residues Asp-114, Glu-151, Lys-184, and 211–214 (RPLL) contribute to the ATP site. Asp-225 provides a ligand contact to substrate.

It belongs to the pyridoxine kinase family. PdxY subfamily. Homodimer. Mg(2+) serves as cofactor.

It catalyses the reaction pyridoxal + ATP = pyridoxal 5'-phosphate + ADP + H(+). Its pathway is cofactor metabolism; pyridoxal 5'-phosphate salvage; pyridoxal 5'-phosphate from pyridoxal: step 1/1. Pyridoxal kinase involved in the salvage pathway of pyridoxal 5'-phosphate (PLP). Catalyzes the phosphorylation of pyridoxal to PLP. This Pseudomonas fluorescens (strain SBW25) protein is Pyridoxal kinase PdxY.